Reading from the N-terminus, the 320-residue chain is Tetraspanin-32 (320 aa).

4 helical membrane passes run 14-34 (MLVTCFFILLLGLSVATMVTL), 60-80 (WAFSAGLSLVGLLTLGAVLSA), 90-110 (LMAGGFLCFSLAFCAQVQVVF), and 203-223 (SIGLALTVSALLFSSFLWFAI).

Belongs to the tetraspanin (TM4SF) family. In terms of tissue distribution, expressed ubiquitously at low levels. High levels of expression are confined to hematopoietic tissues including peripheral blood leukocytes, thymus and spleen.

It is found in the membrane. The polypeptide is Tetraspanin-32 (TSPAN32) (Homo sapiens (Human)).